We begin with the raw amino-acid sequence, 162 residues long: Lysosomal enzyme trafficking factor (162 aa).

2 helical membrane passes run 39–59 (MGWI…YYVF) and 97–117 (LPFW…FLFL).

The protein belongs to the LYSET family.

The protein resides in the golgi apparatus membrane. Its function is as follows. Required for mannose-6-phosphate-dependent trafficking of lysosomal enzymes. LYSET bridges GlcNAc-1-phosphate transferase (GNPTAB), to the membrane-bound transcription factor site-1 protease (MBTPS1), thus allowing proteolytic activation of the GNPTAB. GNPTAB is involved in the regulation of M6P-dependent Golgi-to-lysosome trafficking of lysosomal enzymes. LYSET is thus an essential factor for maturation and delivery of lysosomal hydrolases. The polypeptide is Lysosomal enzyme trafficking factor (lyset) (Xenopus tropicalis (Western clawed frog)).